A 225-amino-acid chain; its full sequence is Octanoyltransferase (225 aa).

Residues 43–225 enclose the BPL/LPL catalytic domain; the sequence is GTAPELVWLL…KTFRDVFGRG (183 aa). Substrate contacts are provided by residues 82–89, 157–159, and 170–172; these read RGGQYTYH, AIG, and GVS. Cys-188 acts as the Acyl-thioester intermediate in catalysis.

The protein belongs to the LipB family.

It localises to the cytoplasm. The enzyme catalyses octanoyl-[ACP] + L-lysyl-[protein] = N(6)-octanoyl-L-lysyl-[protein] + holo-[ACP] + H(+). Its pathway is protein modification; protein lipoylation via endogenous pathway; protein N(6)-(lipoyl)lysine from octanoyl-[acyl-carrier-protein]: step 1/2. Functionally, catalyzes the transfer of endogenously produced octanoic acid from octanoyl-acyl-carrier-protein onto the lipoyl domains of lipoate-dependent enzymes. Lipoyl-ACP can also act as a substrate although octanoyl-ACP is likely to be the physiological substrate. In Parvibaculum lavamentivorans (strain DS-1 / DSM 13023 / NCIMB 13966), this protein is Octanoyltransferase.